An 81-amino-acid chain; its full sequence is uncharacterized protein (81 aa).

The tract at residues 46–81 (ASSPVVKRKSLVKRKSPVKRSPLKKRSQMRTSPCEA) is disordered. Over residues 51-73 (VKRKSLVKRKSPVKRSPLKKRSQ) the composition is skewed to basic residues.

This is an uncharacterized protein from Frog virus 3 (isolate Goorha) (FV-3).